The chain runs to 370 residues: Cytochrome b (370 aa).

Helical transmembrane passes span 25 to 45, 69 to 90, 105 to 125, and 170 to 190; these read FGSM…FLAV, WLMQ…YIHI, WLSG…GYVL, and FFAL…LHVI. The heme b site is built by histidine 75 and histidine 89. Heme b is bound by residues histidine 174 and histidine 188. A ubiquinone is bound at residue histidine 193. 4 helical membrane-spanning segments follow: residues 218–238, 280–300, 312–332, and 339–358; these read YKDL…VSFS, LGGA…PFTH, FMQM…WTAT, and FTLI…ISNP.

This sequence belongs to the cytochrome b family. The cytochrome bc1 complex contains 3 respiratory subunits (MT-CYB, CYC1 and UQCRFS1), 2 core proteins (UQCRC1 and UQCRC2) and probably 6 low-molecular weight proteins. Requires heme b as cofactor.

It localises to the mitochondrion inner membrane. Component of the ubiquinol-cytochrome c reductase complex (complex III or cytochrome b-c1 complex) that is part of the mitochondrial respiratory chain. The b-c1 complex mediates electron transfer from ubiquinol to cytochrome c. Contributes to the generation of a proton gradient across the mitochondrial membrane that is then used for ATP synthesis. The sequence is that of Cytochrome b (MT-CYB) from Eunectes murinus (Green anaconda).